Here is a 1021-residue protein sequence, read N- to C-terminus: DNA-directed RNA polymerase 2B, chloroplastic/mitochondrial (1021 aa).

The interval Lys-315 to Lys-337 is disordered. Catalysis depends on residues Asp-722, Lys-797, and Asp-954.

The protein belongs to the phage and mitochondrial RNA polymerase family.

The protein resides in the plastid. It is found in the chloroplast. It localises to the mitochondrion. It catalyses the reaction RNA(n) + a ribonucleoside 5'-triphosphate = RNA(n+1) + diphosphate. Functionally, DNA-dependent RNA polymerase catalyzes the transcription of DNA into RNA using the four ribonucleoside triphosphates as substrates. This is DNA-directed RNA polymerase 2B, chloroplastic/mitochondrial (RPOT2-TOM) from Nicotiana tabacum (Common tobacco).